We begin with the raw amino-acid sequence, 465 residues long: Ribulose bisphosphate carboxylase large chain (465 aa).

Lys-4 bears the N6,N6,N6-trimethyllysine mark. Residues Asn-113 and Thr-163 each contribute to the substrate site. The Proton acceptor role is filled by Lys-165. Residue Lys-167 coordinates substrate. Residues Lys-191, Asp-193, and Glu-194 each coordinate Mg(2+). Lys-191 carries the N6-carboxylysine modification. His-284 acts as the Proton acceptor in catalysis. Substrate contacts are provided by Arg-285, His-317, and Ser-369.

This sequence belongs to the RuBisCO large chain family. Type I subfamily. As to quaternary structure, heterohexadecamer of 8 large chains and 8 small chains; disulfide-linked. The disulfide link is formed within the large subunit homodimers. It depends on Mg(2+) as a cofactor. The disulfide bond which can form in the large chain dimeric partners within the hexadecamer appears to be associated with oxidative stress and protein turnover.

Its subcellular location is the plastid. The protein localises to the chloroplast. It catalyses the reaction 2 (2R)-3-phosphoglycerate + 2 H(+) = D-ribulose 1,5-bisphosphate + CO2 + H2O. The catalysed reaction is D-ribulose 1,5-bisphosphate + O2 = 2-phosphoglycolate + (2R)-3-phosphoglycerate + 2 H(+). Its function is as follows. RuBisCO catalyzes two reactions: the carboxylation of D-ribulose 1,5-bisphosphate, the primary event in carbon dioxide fixation, as well as the oxidative fragmentation of the pentose substrate in the photorespiration process. Both reactions occur simultaneously and in competition at the same active site. The chain is Ribulose bisphosphate carboxylase large chain from Humiria balsamifera (Tauroniro).